The chain runs to 185 residues: MIQTIDLKKGMVFERDGKLLKVLQINHHKPGKGNTLMQMDIQDLRSGSIVHTTMRPSEKVEQVNVDKRSAQYLYDEGDSAVFMDLESYEQYSLNHDLLGDDKNYLVENMKVILNFVNGDIIGVELPTTVELTVAETEPMIKGATIDGGGKPATMETGLVVNVPAFIKNGDKLIINTTDGSYKSRA.

It belongs to the elongation factor P family.

The protein localises to the cytoplasm. It participates in protein biosynthesis; polypeptide chain elongation. Its function is as follows. Involved in peptide bond synthesis. Stimulates efficient translation and peptide-bond synthesis on native or reconstituted 70S ribosomes in vitro. Probably functions indirectly by altering the affinity of the ribosome for aminoacyl-tRNA, thus increasing their reactivity as acceptors for peptidyl transferase. The polypeptide is Elongation factor P (Limosilactobacillus reuteri (strain DSM 20016) (Lactobacillus reuteri)).